A 255-amino-acid chain; its full sequence is Reaction center protein L chain (255 aa).

3 consecutive transmembrane segments (helical) span residues 11 to 33 (FFGV…GAAL), 61 to 89 (GGLW…SRKL), and 94 to 116 (HVPA…RPLL). Histidine 131 and histidine 151 together coordinate (7R,8Z)-bacteriochlorophyll b. Residues 149 to 176 (PMHMVAVTLFFTTTLALALHGSLVLAAI) form a helical membrane-spanning segment. Histidine 168 provides a ligand contact to Fe cation. Phenylalanine 194 serves as a coordination point for a ubiquinone. A helical membrane pass occupies residues 203–228 (GTLGIHRLGLFLALGAGFASATCILL). A Fe cation-binding site is contributed by histidine 208.

This sequence belongs to the reaction center PufL/M/PsbA/D family. As to quaternary structure, reaction center is composed of four bacteriochlorophylls, two bacteriopheophytins, two ubiquinones, one iron, and two highly hydrophobic polypeptide chains (designated L and M).

It is found in the cell inner membrane. The reaction center is a membrane-bound complex that mediates the initial photochemical event in the electron transfer process of photosynthesis. This is Reaction center protein L chain (pufL) from Acidiphilium multivorum.